The chain runs to 297 residues: 2-dehydropantoate 2-reductase (297 aa).

NADP(+)-binding positions include 11–16, Asn107, and Ala133; that span reads GAGAMG. Asn107 is a substrate binding site. Lys187 (proton donor) is an active-site residue. The substrate site is built by Asn191, Asn195, Asn205, and Ser251. Glu263 provides a ligand contact to NADP(+).

Belongs to the ketopantoate reductase family.

The protein resides in the cytoplasm. The catalysed reaction is (R)-pantoate + NADP(+) = 2-dehydropantoate + NADPH + H(+). It participates in cofactor biosynthesis; (R)-pantothenate biosynthesis; (R)-pantoate from 3-methyl-2-oxobutanoate: step 2/2. Functionally, catalyzes the NADPH-dependent reduction of ketopantoate into pantoic acid. This is 2-dehydropantoate 2-reductase from Listeria monocytogenes serovar 1/2a (strain ATCC BAA-679 / EGD-e).